A 177-amino-acid chain; its full sequence is Nucleoside triphosphate/diphosphate phosphatase (177 aa).

Residue arginine 23 is the Proton donor of the active site. Mg(2+)-binding residues include asparagine 87, aspartate 103, aspartate 105, aspartate 107, aspartate 120, and glutamate 123.

This sequence belongs to the Ntdp family. Requires Mg(2+) as cofactor.

It carries out the reaction a ribonucleoside 5'-triphosphate + H2O = a ribonucleoside 5'-diphosphate + phosphate + H(+). The catalysed reaction is a ribonucleoside 5'-diphosphate + H2O = a ribonucleoside 5'-phosphate + phosphate + H(+). Its function is as follows. Has nucleoside phosphatase activity towards nucleoside triphosphates and nucleoside diphosphates. The polypeptide is Nucleoside triphosphate/diphosphate phosphatase (Streptococcus pneumoniae (strain ATCC 700669 / Spain 23F-1)).